The following is a 414-amino-acid chain: Protein ABHD18 (414 aa).

The N-terminal stretch at 1–24 is a signal peptide; it reads MGVSKLDILYRRLLLTKLFIRGWG. N-linked (GlcNAc...) asparagine glycans are attached at residues Asn282 and Asn307.

Belongs to the AB hydrolase superfamily.

The protein localises to the secreted. The protein is Protein ABHD18 of Homo sapiens (Human).